A 272-amino-acid polypeptide reads, in one-letter code: Acyl-[acyl-carrier-protein]--UDP-N-acetylglucosamine O-acyltransferase (272 aa).

The protein belongs to the transferase hexapeptide repeat family. LpxA subfamily. In terms of assembly, homotrimer.

Its subcellular location is the cytoplasm. It catalyses the reaction a (3R)-hydroxyacyl-[ACP] + UDP-N-acetyl-alpha-D-glucosamine = a UDP-3-O-[(3R)-3-hydroxyacyl]-N-acetyl-alpha-D-glucosamine + holo-[ACP]. The protein operates within glycolipid biosynthesis; lipid IV(A) biosynthesis; lipid IV(A) from (3R)-3-hydroxytetradecanoyl-[acyl-carrier-protein] and UDP-N-acetyl-alpha-D-glucosamine: step 1/6. In terms of biological role, involved in the biosynthesis of lipid A, a phosphorylated glycolipid that anchors the lipopolysaccharide to the outer membrane of the cell. The chain is Acyl-[acyl-carrier-protein]--UDP-N-acetylglucosamine O-acyltransferase from Rhizobium etli (strain ATCC 51251 / DSM 11541 / JCM 21823 / NBRC 15573 / CFN 42).